A 259-amino-acid polypeptide reads, in one-letter code: NAP1-related protein 1 (259 aa).

Positions Met1–Gly15 are enriched in basic and acidic residues. The segment at Met1–Pro20 is disordered. Positions Val21 to Arg62 form a coiled coil. Residues Glu228–Asn259 form a disordered region.

Belongs to the nucleosome assembly protein (NAP) family.

Its subcellular location is the nucleus. It is found in the cytoplasm. In terms of biological role, acts as a histone H2A/H2B chaperone in nucleosome assembly. The sequence is that of NAP1-related protein 1 from Oryza sativa subsp. indica (Rice).